Reading from the N-terminus, the 281-residue chain is HTH-type transcriptional activator RamA (281 aa).

Residues 213 to 278 (RIKQTTKLSA…EAVNAARRIG (66 aa)) form the HTH luxR-type domain.

Functionally, ramA is a master regulator of acetate metabolism. It positively controls the expression of acnA, aceA, aceB, ack, pta and ramB genes in the presence of acetate. RamA is also a positive regulator of rpf2 gene expression during growth on glucose as the sole carbon source. The chain is HTH-type transcriptional activator RamA from Corynebacterium glutamicum (strain ATCC 13032 / DSM 20300 / JCM 1318 / BCRC 11384 / CCUG 27702 / LMG 3730 / NBRC 12168 / NCIMB 10025 / NRRL B-2784 / 534).